A 450-amino-acid chain; its full sequence is Exodeoxyribonuclease 7 large subunit (450 aa).

The protein belongs to the XseA family. As to quaternary structure, heterooligomer composed of large and small subunits.

It is found in the cytoplasm. The catalysed reaction is Exonucleolytic cleavage in either 5'- to 3'- or 3'- to 5'-direction to yield nucleoside 5'-phosphates.. Bidirectionally degrades single-stranded DNA into large acid-insoluble oligonucleotides, which are then degraded further into small acid-soluble oligonucleotides. The polypeptide is Exodeoxyribonuclease 7 large subunit (Rickettsia felis (strain ATCC VR-1525 / URRWXCal2) (Rickettsia azadi)).